Here is a 295-residue protein sequence, read N- to C-terminus: Ribosomal RNA small subunit methyltransferase A (295 aa).

The S-adenosyl-L-methionine site is built by asparagine 29, leucine 31, glycine 56, glutamate 77, aspartate 102, and asparagine 128.

Belongs to the class I-like SAM-binding methyltransferase superfamily. rRNA adenine N(6)-methyltransferase family. RsmA subfamily.

Its subcellular location is the cytoplasm. It carries out the reaction adenosine(1518)/adenosine(1519) in 16S rRNA + 4 S-adenosyl-L-methionine = N(6)-dimethyladenosine(1518)/N(6)-dimethyladenosine(1519) in 16S rRNA + 4 S-adenosyl-L-homocysteine + 4 H(+). Specifically dimethylates two adjacent adenosines (A1518 and A1519) in the loop of a conserved hairpin near the 3'-end of 16S rRNA in the 30S particle. May play a critical role in biogenesis of 30S subunits. The sequence is that of Ribosomal RNA small subunit methyltransferase A from Listeria welshimeri serovar 6b (strain ATCC 35897 / DSM 20650 / CCUG 15529 / CIP 8149 / NCTC 11857 / SLCC 5334 / V8).